The following is a 485-amino-acid chain: Probable alginate O-acetylase AlgI (485 aa).

A run of 9 helical transmembrane segments spans residues 7 to 24 (VFLF…YLSG), 39 to 61 (FYAW…NYWI), 78 to 100 (WLLL…NFGV), 115 to 137 (FILT…ISYI), 150 to 172 (NLID…VLRF), 312 to 334 (FLTM…WGAW), 360 to 382 (AFTF…HVAA), 402 to 424 (AQLT…FFGL), and 461 to 483 (ILLL…FLYF). His322 is a catalytic residue.

The protein belongs to the membrane-bound acyltransferase family.

It localises to the cell inner membrane. The protein operates within glycan biosynthesis; alginate biosynthesis. Functionally, together with AlgJ and AlgF, forms an inner membrane complex which probably interacts with the alginate polymerization-transport complex and adds acetyl groups at the O-2 and O-3 positions of mannuronate residues. Acetylation of alginate is important for the architecture of biofilms and increases the ability of alginate to act as a defense barrier. This is Probable alginate O-acetylase AlgI (algI) from Pseudomonas putida (strain ATCC 47054 / DSM 6125 / CFBP 8728 / NCIMB 11950 / KT2440).